Reading from the N-terminus, the 71-residue chain is Ranatuerin-2PLa (71 aa).

Positions 1–22 (MFTTKKSMLLFFFLGTISLSLC) are cleaved as a signal peptide. The propeptide occupies 23-41 (EQERGADEDDGVEMTEEEV). Cys-66 and Cys-71 are disulfide-bonded.

As to expression, expressed by the skin glands.

It localises to the secreted. Its function is as follows. May have antimicrobial activity against the Gram-negative bacterium E.coli. The chain is Ranatuerin-2PLa from Lithobates palustris (Pickerel frog).